The chain runs to 326 residues: D-alanine--D-alanine ligase (326 aa).

An ATP-grasp domain is found at 121-320 (ISVLRPYGIK…LKDLFGSTIE (200 aa)). 149–204 (VDKVGLPCFVKANRAGSSFGVTKVKTEDEIISAAKTAFTEDDEAIIESFLDGTEVS) serves as a coordination point for ATP. Positions 275, 287, and 289 each coordinate Mg(2+).

This sequence belongs to the D-alanine--D-alanine ligase family. Mg(2+) is required as a cofactor. The cofactor is Mn(2+).

The protein localises to the cytoplasm. It catalyses the reaction 2 D-alanine + ATP = D-alanyl-D-alanine + ADP + phosphate + H(+). It participates in cell wall biogenesis; peptidoglycan biosynthesis. Functionally, cell wall formation. In Christiangramia forsetii (strain DSM 17595 / CGMCC 1.15422 / KT0803) (Gramella forsetii), this protein is D-alanine--D-alanine ligase.